A 250-amino-acid polypeptide reads, in one-letter code: 2,3-bisphosphoglycerate-dependent phosphoglycerate mutase (250 aa).

Substrate-binding positions include 12-19, 25-26, Arg-64, 91-94, Lys-102, 118-119, and 185-186; these read RHGQSAWN, TG, ERHY, RR, and GN. His-13 functions as the Tele-phosphohistidine intermediate in the catalytic mechanism. Glu-91 (proton donor/acceptor) is an active-site residue.

It belongs to the phosphoglycerate mutase family. BPG-dependent PGAM subfamily.

The enzyme catalyses (2R)-2-phosphoglycerate = (2R)-3-phosphoglycerate. It participates in carbohydrate degradation; glycolysis; pyruvate from D-glyceraldehyde 3-phosphate: step 3/5. Catalyzes the interconversion of 2-phosphoglycerate and 3-phosphoglycerate. This is 2,3-bisphosphoglycerate-dependent phosphoglycerate mutase from Corynebacterium efficiens (strain DSM 44549 / YS-314 / AJ 12310 / JCM 11189 / NBRC 100395).